The following is an 846-amino-acid chain: Translation initiation factor IF-2 (846 aa).

A disordered region spans residues 94 to 263 (QRSPEEIQAE…HGFQNPTGPV (170 aa)). Over residues 96–135 (SPEEIQAEQKRELEERRAAENAARDKVEAEVRQRNEEQAR) the composition is skewed to basic and acidic residues. 2 stretches are compositionally biased toward low complexity: residues 136–148 (RQAA…APAP) and 158–176 (AAPV…ASED). Composition is skewed to basic and acidic residues over residues 177–206 (AAAR…RGEA) and 230–239 (TTDEESDGAR). Positions 240-253 (RGRGGKSKLKKRNQ) are enriched in basic residues. A tr-type G domain is found at 346 to 513 (SRAPVVTVMG…AVLLQAEILE (168 aa)). A G1 region spans residues 355–362 (GHVDHGKT). 355–362 (GHVDHGKT) is a GTP binding site. Positions 380 to 384 (GITQH) are G2. Residues 401–404 (DTPG) form a G3 region. GTP-binding positions include 401–405 (DTPGH) and 455–458 (NKID). The tract at residues 455-458 (NKID) is G4. The tract at residues 491 to 493 (SAK) is G5.

It belongs to the TRAFAC class translation factor GTPase superfamily. Classic translation factor GTPase family. IF-2 subfamily.

The protein localises to the cytoplasm. In terms of biological role, one of the essential components for the initiation of protein synthesis. Protects formylmethionyl-tRNA from spontaneous hydrolysis and promotes its binding to the 30S ribosomal subunits. Also involved in the hydrolysis of GTP during the formation of the 70S ribosomal complex. This Pseudomonas putida (strain ATCC 700007 / DSM 6899 / JCM 31910 / BCRC 17059 / LMG 24140 / F1) protein is Translation initiation factor IF-2.